Here is a 373-residue protein sequence, read N- to C-terminus: Glutamate 5-kinase (373 aa).

Lys-15 serves as a coordination point for ATP. Ser-55, Asp-142, and Asn-154 together coordinate substrate. Residue 174-175 (TD) coordinates ATP. The PUA domain maps to 281–359 (RGSVVLDDGA…SQIEAVLGYV (79 aa)).

This sequence belongs to the glutamate 5-kinase family.

It is found in the cytoplasm. The enzyme catalyses L-glutamate + ATP = L-glutamyl 5-phosphate + ADP. Its pathway is amino-acid biosynthesis; L-proline biosynthesis; L-glutamate 5-semialdehyde from L-glutamate: step 1/2. Its function is as follows. Catalyzes the transfer of a phosphate group to glutamate to form L-glutamate 5-phosphate. This chain is Glutamate 5-kinase, found in Nitrosomonas eutropha (strain DSM 101675 / C91 / Nm57).